Consider the following 229-residue polypeptide: Zinc finger matrin-type protein 4 (229 aa).

2 Matrin-type zinc fingers span residues Ser14–Leu44 and Asp72–Leu106. The interval Thr116–Ala135 is disordered. Matrin-type zinc fingers lie at residues Arg145 to Arg175 and Tyr198 to Asn228.

The protein localises to the nucleus. This chain is Zinc finger matrin-type protein 4 (ZMAT4), found in Homo sapiens (Human).